A 1202-amino-acid polypeptide reads, in one-letter code: Caskin-2 (1202 aa).

ANK repeat units lie at residues 48–77, 81–110, 114–143, 147–176, 188–217, and 220–249; these read DGFSALHHAALGGSLELIALLLEAQATVDI, NGMRPLHYAAWQGRLEPVRLLLRASAAVNA, DGQIPLHLAAQYGHYEVSEMLLQHQSNPCL, AKKTPLDLACEFGRLKVAQLLLNSHLCVAL, NYTTPLHLAAKNGHREVIRQLLRAGIEINR, and KTGTALHEAALYGKTEVVRLLLEGGVDVNI. At tyrosine 253 the chain carries Phosphotyrosine. The 67-residue stretch at 281-347 folds into the SH3 domain; it reads SGILKVRALK…PPGIVEVVSK (67 aa). Positions 355-460 are disordered; the sequence is RLPSAPTPLR…GLHPPSLADN (106 aa). Phosphoserine occurs at positions 358, 393, 396, 403, 406, and 409. Residues 415-425 show a composition bias toward polar residues; that stretch reads SAGSGQSSEGT. Position 471 is a phosphoserine (serine 471). SAM domains are found at residues 489–552 and 558–622; these read KDAQ…LSIA and YIPT…LAEL. Disordered regions lie at residues 676–1104 and 1116–1181; these read LQAA…APKP and GPKL…STKH. Residue serine 725 is modified to Phosphoserine. Positions 731–740 are enriched in basic and acidic residues; the sequence is NLPEGTERPP. The span at 765–774 shows a compositional bias: pro residues; sequence SPAPGPPPGA. Phosphoserine is present on residues serine 858, serine 877, serine 878, and serine 892. A compositionally biased stretch (pro residues) spans 913–923; the sequence is PSEPPGPPAPA. Residues 940 to 949 show a composition bias toward low complexity; the sequence is PPSRGSSGEG. 2 stretches are compositionally biased toward pro residues: residues 966–978 and 1018–1030; these read PAGPPPRETPVPP and PAAPLPSPTPGES. Residues 1031-1051 are compositionally biased toward low complexity; that stretch reads PPASSLPQPEPSSLPAQGVPT. Pro residues-rich tracts occupy residues 1052–1068 and 1124–1133; these read PLAPSPAMQPPVPPCPG and GPRPVPPPRP. Over residues 1135–1151 the composition is skewed to polar residues; that stretch reads STGTVGPGQAQQRLEQT. Residues 1161-1172 show a composition bias toward basic and acidic residues; that stretch reads AAEKSIGTKEQE.

As to quaternary structure, may not bind CASK.

The protein resides in the cytoplasm. The chain is Caskin-2 (CASKIN2) from Homo sapiens (Human).